A 475-amino-acid chain; its full sequence is Ankyrin repeat, SAM and basic leucine zipper domain-containing protein 1 (475 aa).

A disordered region spans residues 1-24 (MAASALRGPPVAGGGESSESEDDG). Phosphoserine is present on residues Ser-17, Ser-18, and Ser-20. 6 ANK repeats span residues 45–74 (EKKE…SVDS), 78–107 (YGWT…NASF), 110–144 (DKQS…DPNV), 148–177 (RLMT…EVNT), 181–210 (NGYT…NKML), and 214–243 (DGKM…PLEG). An SAM domain is found at 272-334 (SYTAFGDLEV…KILAALKELQ (63 aa)).

Interacts with DDX4, PIWIL1, RANBP9 and TDRD1.

The protein resides in the cytoplasm. Plays a central role during spermatogenesis by repressing transposable elements and preventing their mobilization, which is essential for the germline integrity. Acts via the piRNA metabolic process, which mediates the repression of transposable elements during meiosis by forming complexes composed of piRNAs and Piwi proteins and governs the methylation and subsequent repression of transposons. Its association with pi-bodies suggests a participation in the primary piRNAs metabolic process. Required prior to the pachytene stage to facilitate the production of multiple types of piRNAs, including those associated with repeats involved in the regulation of retrotransposons. May act by mediating protein-protein interactions during germ cell maturation. The chain is Ankyrin repeat, SAM and basic leucine zipper domain-containing protein 1 (ASZ1) from Gorilla gorilla gorilla (Western lowland gorilla).